The primary structure comprises 428 residues: Enolase (428 aa).

A (2R)-2-phosphoglycerate-binding site is contributed by Gln-163. The Proton donor role is filled by Glu-205. Positions 243, 286, and 313 each coordinate Mg(2+). Residues Lys-338, Arg-367, Ser-368, and Lys-389 each coordinate (2R)-2-phosphoglycerate. Catalysis depends on Lys-338, which acts as the Proton acceptor.

Belongs to the enolase family. The cofactor is Mg(2+).

Its subcellular location is the cytoplasm. It is found in the secreted. The protein localises to the cell surface. The catalysed reaction is (2R)-2-phosphoglycerate = phosphoenolpyruvate + H2O. The protein operates within carbohydrate degradation; glycolysis; pyruvate from D-glyceraldehyde 3-phosphate: step 4/5. In terms of biological role, catalyzes the reversible conversion of 2-phosphoglycerate (2-PG) into phosphoenolpyruvate (PEP). It is essential for the degradation of carbohydrates via glycolysis. The protein is Enolase of Polaromonas naphthalenivorans (strain CJ2).